Consider the following 665-residue polypeptide: Probable protein transport Sec1a (665 aa).

The disordered stretch occupies residues 543 to 594; that stretch reads PSPSFRGIPSASTQTSPAHQPAQSMRSRRTGGTWARPRDSDDGYSSDSVLKH. 2 stretches are compositionally biased toward polar residues: residues 552-567 and 585-594; these read SASTQTSPAHQPAQSM and GYSSDSVLKH.

It belongs to the STXBP/unc-18/SEC1 family.

Functionally, involved in the vesicle trafficking. Binds syntaxins. The protein is Probable protein transport Sec1a of Oryza sativa subsp. japonica (Rice).